Here is a 641-residue protein sequence, read N- to C-terminus: MGKIIGIDLGTTNSCVSVMEGGKPKVIENSEGARTTPSVVAYAEDGEILVGAPAKRQAVTNARNTLFAVKRLIGRRFEEKEVQKDIDLMPYTIAKADNGDAWVEVRGKKIAPPQVSAEVLRKMKKTAEDYLGEEVTEAVITVPAYFNDSQRQATKDAGRIAGLEVKRIINEPTAAALAFGMDKKPGDSKIAVYDLGGGTFDISIIEIADIDGEHQFEVLATNGDTFLGGEDFDQRIIDYIVTEFKKEQGVDLKNDVLALQRLKEAAEKAKIELSSGSQTEVNLPYITADATGPKHLAIKITRAKFESLVEDLIERSIEPCRIALKDAGVKVSDIDDVILVGGQTRMPKVIEKVKEFFGKEPRRDVNPDEAVAVGASIQGGVLQGEVKDVLLLDVTPLSLGIETLGGVMTKLIQKNTTIPTKASQVFSTADDNQSAVTIHVLQGEREMASGNKSLGQFNLSDIPPAPRGMPQIEVTFDIDANGILHVSAKDKATGKENKIKIQANSGLSDEEVERMVRDAAAHAEEDKKAHELVDARNQCDALIHSTKKALAEHGDKIGADDKAKIEAAMKDAEEAIKSGDKDSIEAKSQALAMASQKLGEAMYGQQQAEGGAQAAGAAGGSSKADDADVVDAEFTEVKDKK.

At threonine 199 the chain carries Phosphothreonine; by autocatalysis. A disordered region spans residues 603–627; that stretch reads YGQQQAEGGAQAAGAAGGSSKADDA. A compositionally biased stretch (low complexity) spans 604-616; it reads GQQQAEGGAQAAG.

This sequence belongs to the heat shock protein 70 family.

Functionally, acts as a chaperone. This Azoarcus sp. (strain BH72) protein is Chaperone protein DnaK.